Consider the following 470-residue polypeptide: L-seryl-tRNA(Sec) selenium transferase (470 aa).

The residue at position 292 (lysine 292) is an N6-(pyridoxal phosphate)lysine.

It belongs to the SelA family. Pyridoxal 5'-phosphate is required as a cofactor.

It localises to the cytoplasm. The enzyme catalyses L-seryl-tRNA(Sec) + selenophosphate + H(+) = L-selenocysteinyl-tRNA(Sec) + phosphate. It participates in aminoacyl-tRNA biosynthesis; selenocysteinyl-tRNA(Sec) biosynthesis; selenocysteinyl-tRNA(Sec) from L-seryl-tRNA(Sec) (bacterial route): step 1/1. Functionally, converts seryl-tRNA(Sec) to selenocysteinyl-tRNA(Sec) required for selenoprotein biosynthesis. This is L-seryl-tRNA(Sec) selenium transferase from Moorella thermoacetica (strain ATCC 39073 / JCM 9320).